The chain runs to 272 residues: Putative phosphoenolpyruvate synthase regulatory protein (272 aa).

152–159 is an ADP binding site; the sequence is GVSRCGKT.

This sequence belongs to the pyruvate, phosphate/water dikinase regulatory protein family. PSRP subfamily.

The catalysed reaction is [pyruvate, water dikinase] + ADP = [pyruvate, water dikinase]-phosphate + AMP + H(+). It catalyses the reaction [pyruvate, water dikinase]-phosphate + phosphate + H(+) = [pyruvate, water dikinase] + diphosphate. In terms of biological role, bifunctional serine/threonine kinase and phosphorylase involved in the regulation of the phosphoenolpyruvate synthase (PEPS) by catalyzing its phosphorylation/dephosphorylation. This is Putative phosphoenolpyruvate synthase regulatory protein from Pseudomonas fluorescens (strain ATCC BAA-477 / NRRL B-23932 / Pf-5).